Here is a 592-residue protein sequence, read N- to C-terminus: Vacuolin-B (592 aa).

Polar residues predominate over residues 1-30 (MIESSSFMKKTSSENSIGSRSNIHEASTFS). Residues 1–35 (MIESSSFMKKTSSENSIGSRSNIHEASTFSSEHEN) form a disordered region. The stretch at 480–534 (KTTEARLKAETDNIALEQKGKAIIAEAQAKLESAQKQAQALLITAEAQKKVQEMQ) forms a coiled coil. Residues 491–555 (DNIALEQKGK…EIELAKIKSE (65 aa)) are oligomerization domain.

It belongs to the vacuolin family. In terms of assembly, homotrimer.

Its subcellular location is the endosome membrane. The protein resides in the lysosome membrane. Negative regulator of late steps of the endocytic pathway. The sequence is that of Vacuolin-B (vacB) from Dictyostelium discoideum (Social amoeba).